The primary structure comprises 329 residues: tRNA-modifying protein YgfZ (329 aa).

Residues W32 and W190 each contribute to the folate site.

Belongs to the tRNA-modifying YgfZ family.

It localises to the cytoplasm. In terms of biological role, folate-binding protein involved in regulating the level of ATP-DnaA and in the modification of some tRNAs. It is probably a key factor in regulatory networks that act via tRNA modification, such as initiation of chromosomal replication. The chain is tRNA-modifying protein YgfZ from Photobacterium profundum (strain SS9).